Here is a 377-residue protein sequence, read N- to C-terminus: Interferon gamma receptor 1 (377 aa).

Positions 1-23 (MRTQIYISVTVLILLLKKSDLEA) are cleaved as a signal peptide. At 24–235 (VRVPSPESVS…IRRYTPFTVY (212 aa)) the chain is on the extracellular side. The 92-residue stretch at 26–117 (VPSPESVSVQ…DFFIFSFNEN (92 aa)) folds into the Fibronectin type-III domain. N-linked (GlcNAc...) asparagine glycosylation is found at N78 and N186. Residues 236 to 256 (LYPVLGVTLTLLFITGIIILL) form a helical membrane-spanning segment. Over 257 to 377 (EKKCNSEMKK…TVDSYGPRLL (121 aa)) the chain is Cytoplasmic. The segment at 326–377 (VYSEDKNSYGPNDLVEDEQSDLSDFYDCPHAPKQKREMSPGDTVDSYGPRLL) is disordered.

It belongs to the type II cytokine receptor family. In terms of tissue distribution, highly expressed in spleen. Also detected in brain, kidney, gill, intestine and heart. Expressed at very low levels in muscle. In immune cell populations, shows highest expression in monocytes, and slightly lower expression in peripheral blood leukocytes, splenocytes, neutrophils and mature macrophages.

The protein resides in the cell membrane. Receptor which shows binding specificity for the cytokine ifng1r (interferon gamma-related). This is Interferon gamma receptor 1 from Carassius auratus (Goldfish).